The sequence spans 127 residues: Mu-like prophage FluMu protein gp41 (127 aa).

The tract at residues 107–127 (VSRGRLDTADQETGKDLSAVS) is disordered. Over residues 110–121 (GRLDTADQETGK) the composition is skewed to basic and acidic residues.

To phage Mu protein gp41.

The polypeptide is Mu-like prophage FluMu protein gp41 (Haemophilus influenzae (strain ATCC 51907 / DSM 11121 / KW20 / Rd)).